A 426-amino-acid chain; its full sequence is Serine--tRNA ligase (426 aa).

L-serine is bound at residue threonine 233–glutamate 235. Residue arginine 264 to glutamate 266 participates in ATP binding. Glutamate 287 is an L-serine binding site. An ATP-binding site is contributed by glutamate 351 to serine 354. Serine 387 provides a ligand contact to L-serine.

Belongs to the class-II aminoacyl-tRNA synthetase family. Type-1 seryl-tRNA synthetase subfamily. In terms of assembly, homodimer. The tRNA molecule binds across the dimer.

It is found in the cytoplasm. The catalysed reaction is tRNA(Ser) + L-serine + ATP = L-seryl-tRNA(Ser) + AMP + diphosphate + H(+). It carries out the reaction tRNA(Sec) + L-serine + ATP = L-seryl-tRNA(Sec) + AMP + diphosphate + H(+). The protein operates within aminoacyl-tRNA biosynthesis; selenocysteinyl-tRNA(Sec) biosynthesis; L-seryl-tRNA(Sec) from L-serine and tRNA(Sec): step 1/1. Functionally, catalyzes the attachment of serine to tRNA(Ser). Is also able to aminoacylate tRNA(Sec) with serine, to form the misacylated tRNA L-seryl-tRNA(Sec), which will be further converted into selenocysteinyl-tRNA(Sec). The protein is Serine--tRNA ligase of Pseudomonas putida (strain GB-1).